A 517-amino-acid polypeptide reads, in one-letter code: uncharacterized protein (517 aa).

Disordered stretches follow at residues 16–148, 156–175, and 216–351; these read KDES…TITK, VNKE…NTTT, and KLEK…EENE. The span at 48–75 shows a compositional bias: low complexity; that stretch reads NNNNNNNNTTTTNNNTNNSNTSTSNNSK. A compositionally biased stretch (acidic residues) spans 84-112; sequence FDDDDDDGDEEDEEEEDDDDDDDDDDDET. Residues 127 to 143 are compositionally biased toward pro residues; sequence QPQPQPQPQPQPQPPIK. Residues 236-252 show a composition bias toward polar residues; it reads VSSTLSNSFDPNIIHNQ. Pro residues predominate over residues 254–266; that stretch reads SPPPPPISIPIPL. 2 stretches are compositionally biased toward low complexity: residues 271 to 320 and 327 to 347; these read NLNN…NSNI and SSSM…SNNN. Positions 340-452 form a coiled coil; it reads DNSSSNNNEE…HQNQQNSMNN (113 aa).

It belongs to the ENTR1 family.

This is an uncharacterized protein from Dictyostelium discoideum (Social amoeba).